The following is a 125-amino-acid chain: UPF0763 protein NAMH_0545 (125 aa).

This sequence belongs to the UPF0763 family.

The sequence is that of UPF0763 protein NAMH_0545 from Nautilia profundicola (strain ATCC BAA-1463 / DSM 18972 / AmH).